A 405-amino-acid polypeptide reads, in one-letter code: Formate-dependent phosphoribosylglycinamide formyltransferase (405 aa).

N(1)-(5-phospho-beta-D-ribosyl)glycinamide-binding positions include 22 to 23 and glutamate 82; that span reads EL. Residues arginine 115, lysine 162, 167–172, 202–205, and glutamate 210 each bind ATP; these read SSGKGQ and EGFI. An ATP-grasp domain is found at 120–320; that stretch reads RLAAETLGLP…EFELHARAIL (201 aa). Mg(2+)-binding residues include glutamate 279 and glutamate 291. N(1)-(5-phospho-beta-D-ribosyl)glycinamide contacts are provided by residues aspartate 298, lysine 367, and 374-375; that span reads RR.

The protein belongs to the PurK/PurT family. As to quaternary structure, homodimer.

It carries out the reaction N(1)-(5-phospho-beta-D-ribosyl)glycinamide + formate + ATP = N(2)-formyl-N(1)-(5-phospho-beta-D-ribosyl)glycinamide + ADP + phosphate + H(+). The protein operates within purine metabolism; IMP biosynthesis via de novo pathway; N(2)-formyl-N(1)-(5-phospho-D-ribosyl)glycinamide from N(1)-(5-phospho-D-ribosyl)glycinamide (formate route): step 1/1. Functionally, involved in the de novo purine biosynthesis. Catalyzes the transfer of formate to 5-phospho-ribosyl-glycinamide (GAR), producing 5-phospho-ribosyl-N-formylglycinamide (FGAR). Formate is provided by PurU via hydrolysis of 10-formyl-tetrahydrofolate. The sequence is that of Formate-dependent phosphoribosylglycinamide formyltransferase from Leptothrix cholodnii (strain ATCC 51168 / LMG 8142 / SP-6) (Leptothrix discophora (strain SP-6)).